The chain runs to 646 residues: MSSNSWADVSESERAPSGGGWGYSRPSRTNYVPPHLRSRTPSSEFVAPSPGNNDRGGYGGANSGYGGRGQGYGGRGSGYGGRGGPVGGWNARSGGWDRRDTETNPFGNDGNADPAVNEQENTVINFEAYEDIPIETSGDNVPPPVNTFAEIDLGEALNLNIQRCKYVKPTPVQRNAIPILAAGRDLMACAQTGSGKTAAFCFPIISGIMKDQHIERPRGVRGVYPLAVILSPTRELACQIHDEARKFSYQTGVKVVVAYGGTPVNQQIRELERGVDILVATPGRLNDLLERGRVSLQMVRFLALDEADRMLDMGFEPQIRKIVQQMDMPPPGVRQTMLFSATFPREIQRLASDFLSNYIFLAVGRVGSSTDLIVQRVEFVHDSDKRSHLMDLLHAQRENGNQGKQALTLVFVETKKGADSLENWLCINGFPATTIHGDRSQQEREVALRSFKTGRTPILVATDVAARGLDIPHVAHVVNFDLPNDIDDYVHRIGRTGRAGNSGLATAFFNDNNTTMAKPLAELMQEANQEVPDWLTRYASRASFGGGKNRRSGGRFGGRDFRRESFSRGGGGADYYGGGGGYGGVPGGGYGAMPGGYGPVPGGGYGNVPGGGYAPYGRGGGAYYGPGGYGTVPNQGYGPGVASAWD.

Disordered regions lie at residues 1-64 and 76-117; these read MSSN…ANSG and GSGY…PAVN. Serine 2 carries the post-translational modification N-acetylserine. 2 stretches are compositionally biased toward gly residues: residues 54–64 and 76–87; these read DRGGYGGANSG and GSGYGGRGGPVG. A Q motif motif is present at residues 146-174; that stretch reads NTFAEIDLGEALNLNIQRCKYVKPTPVQR. The Helicase ATP-binding domain occupies 177-361; it reads IPILAAGRDL…SDFLSNYIFL (185 aa). Residue 190–197 participates in ATP binding; it reads AQTGSGKT. A DEAD box motif is present at residues 305 to 308; the sequence is DEAD. In terms of domain architecture, Helicase C-terminal spans 388 to 539; it reads HLMDLLHAQR…EVPDWLTRYA (152 aa).

This sequence belongs to the DEAD box helicase family. DDX3/DED1 subfamily.

It catalyses the reaction ATP + H2O = ADP + phosphate + H(+). The polypeptide is DEAD-box ATP-dependent RNA helicase 52 (RH52) (Arabidopsis thaliana (Mouse-ear cress)).